The chain runs to 314 residues: 2,3-dihydroxyphenylpropionate/2,3-dihydroxicinnamic acid 1,2-dioxygenase (314 aa).

His115 functions as the Proton donor in the catalytic mechanism. His179 acts as the Proton acceptor in catalysis.

Belongs to the LigB/MhpB extradiol dioxygenase family. As to quaternary structure, homotetramer. Fe(2+) serves as cofactor.

The enzyme catalyses 3-(2,3-dihydroxyphenyl)propanoate + O2 = (2Z,4E)-2-hydroxy-6-oxonona-2,4-dienedioate + H(+). It carries out the reaction (2E)-3-(2,3-dihydroxyphenyl)prop-2-enoate + O2 = (2Z,4E,7E)-2-hydroxy-6-oxonona-2,4,7-trienedioate + H(+). It functions in the pathway aromatic compound metabolism; 3-phenylpropanoate degradation. In terms of biological role, catalyzes the non-heme iron(II)-dependent oxidative cleavage of 2,3-dihydroxyphenylpropionic acid and 2,3-dihydroxicinnamic acid into 2-hydroxy-6-ketononadienedioate and 2-hydroxy-6-ketononatrienedioate, respectively. This chain is 2,3-dihydroxyphenylpropionate/2,3-dihydroxicinnamic acid 1,2-dioxygenase, found in Escherichia coli O139:H28 (strain E24377A / ETEC).